Here is a 411-residue protein sequence, read N- to C-terminus: E3 ubiquitin-protein ligase PUB23 (411 aa).

The 76-residue stretch at 11–86 (EIPPFFLCPI…QSWCTLNASY (76 aa)) folds into the U-box domain. 4 ARM repeats span residues 132 to 173 (ATNK…HLET), 175 to 203 (ETVL…RGMY), 221 to 261 (DPMQ…NICP), and 263 to 306 (GRNR…LLCQ).

Interacts with RPN12A. Auto-ubiquitinated.

It is found in the cytoplasm. It catalyses the reaction S-ubiquitinyl-[E2 ubiquitin-conjugating enzyme]-L-cysteine + [acceptor protein]-L-lysine = [E2 ubiquitin-conjugating enzyme]-L-cysteine + N(6)-ubiquitinyl-[acceptor protein]-L-lysine.. Its pathway is protein modification; protein ubiquitination. E3 ubiquitin-protein ligase that negatively regulates water stress response. May control in coordination with PUB23 a drought signaling pathway by ubiquitinating cytosolic RPN12a. Acts as a negative regulator of the immunity triggered by the pathogen-associated molecular patterns (PAMPs), in association with PUB22 and PUB24. The protein is E3 ubiquitin-protein ligase PUB23 (PUB23) of Arabidopsis thaliana (Mouse-ear cress).